Here is an 84-residue protein sequence, read N- to C-terminus: uncharacterized protein (84 aa).

This is an uncharacterized protein from Acidianus convivator (ATV).